The sequence spans 331 residues: Tyrosine--tRNA ligase (331 aa).

L-tyrosine is bound by residues Tyr31, Tyr155, Gln159, Asp162, and Gln177. The short motif at 218 to 222 is the 'KMSKS' region element; it reads KMSKS. Lys221 is an ATP binding site.

It belongs to the class-I aminoacyl-tRNA synthetase family. TyrS type 4 subfamily. As to quaternary structure, homodimer.

It localises to the cytoplasm. It catalyses the reaction tRNA(Tyr) + L-tyrosine + ATP = L-tyrosyl-tRNA(Tyr) + AMP + diphosphate + H(+). Its function is as follows. Catalyzes the attachment of tyrosine to tRNA(Tyr) in a two-step reaction: tyrosine is first activated by ATP to form Tyr-AMP and then transferred to the acceptor end of tRNA(Tyr). The protein is Tyrosine--tRNA ligase of Thermoplasma volcanium (strain ATCC 51530 / DSM 4299 / JCM 9571 / NBRC 15438 / GSS1).